A 357-amino-acid polypeptide reads, in one-letter code: Protein-L-isoaspartate O-methyltransferase domain-containing protein 1 (357 aa).

Residue G2 is the site of N-myristoyl glycine attachment. Residue S64 is part of the active site. AdoMet binding motif regions lie at residues 85 to 94, 160 to 164, and 181 to 191; these read LNLGSGTGYL, YDRIY, and LKVGGILVMPI. The segment at 240–250 is BC-box; sequence VRNLQDLARIY. A disordered region spans residues 299–331; that stretch reads PLDSEEDEKMEEDSKEEEEKEHIEAMKREEPPQ. The segment covering 301–317 has biased composition (acidic residues); the sequence is DSEEDEKMEEDSKEEEE. The segment covering 318–331 has biased composition (basic and acidic residues); the sequence is KEHIEAMKREEPPQ. Residues 341 to 344 are CUL-box; that stretch reads LPLP.

Belongs to the methyltransferase superfamily. L-isoaspartyl/D-aspartyl protein methyltransferase family. In terms of assembly, component of the probable ECS(PCMTD1) E3 ubiquitin-protein ligase complex, at least composed of CUL5, ELOB, ELOC, RBX2 and PCMTD1. Interacts (via the BC-box) with ELOB and ELOC; the interaction is direct and stabilizes PCMTD1.

Its subcellular location is the cytoplasm. The protein localises to the membrane. Its function is as follows. Substrate recognition component of an ECS (Elongin BC-CUL5-SOCS-box protein) E3 ubiquitin ligase complex which mediates the ubiquitination and subsequent proteasomal degradation of target proteins. Specifically binds to the methyltransferase cofactor S-adenosylmethionine (AdoMet) via the N-terminal AdoMet binding motif, but does not display methyltransferase activity. May provide an alternate maintenance pathway for modified proteins by acting as a damage-specific E3 ubiquitin ligase adaptor protein. The protein is Protein-L-isoaspartate O-methyltransferase domain-containing protein 1 (Pcmtd1) of Mus musculus (Mouse).